Consider the following 471-residue polypeptide: Metal tolerance protein C1 (471 aa).

Residues 1–78 (MGIIRFQILN…PGEEGEKIFR (78 aa)) lie on the Cytoplasmic side of the membrane. Residues 79-99 (LGLTADIGLSVAKALTGYLCG) traverse the membrane as a helical segment. The Vacuolar segment spans residues 100–101 (ST). The helical transmembrane segment at 102-122 (AIIADAAHSVSDVVLSGVALV) threads the bilayer. Topologically, residues 123–144 (SYRAANVPKDKEHPYGHGKFET) are cytoplasmic. Residues 145–165 (LGALGISAMLLATGSGIAWHA) traverse the membrane as a helical segment. The Vacuolar segment spans residues 166-192 (LDLLSIALSAAPEVIHSGHHHGIDMNH). A helical membrane pass occupies residues 193-213 (PILALTVTIASISIKEGLYWI). Residues 214–236 (TKRAGEKQGSGLMMANAWHHRSD) lie on the Cytoplasmic side of the membrane. A helical transmembrane segment spans residues 237–257 (AISSLVALVGVGGSILGVNFL). The Vacuolar portion of the chain corresponds to 258-423 (DPLAGLVVST…RITPHLLHSK (166 aa)). Residues 424–444 (ILLQIVVAMPSTMSIQDVMIA) traverse the membrane as a helical segment. The Cytoplasmic portion of the chain corresponds to 445-471 (AEHAEKEILKAAPNVARVSIQLSLNSE).

It belongs to the cation diffusion facilitator (CDF) transporter (TC 2.A.4) family.

The protein resides in the vacuole membrane. In terms of biological role, involved in sequestration of excess metal in the cytoplasm into vacuoles to maintain metal homeostasis. The polypeptide is Metal tolerance protein C1 (MTPC1) (Arabidopsis thaliana (Mouse-ear cress)).